An 889-amino-acid polypeptide reads, in one-letter code: Protein argonaute 15 (889 aa).

Disordered regions lie at residues 1–26 and 119–150; these read MESH…SRKG and EDAS…RMKR. Residues 122–132 are compositionally biased toward low complexity; it reads SSSGRTTTRRS. One can recognise a PAZ domain in the interval 264–379; it reads PVIEFLLFNQ…IPLELCHLVP (116 aa). A Piwi domain is found at 546–853; it reads FVLCVLPERK…AAAQVSQFVR (308 aa). Positions 857 to 878 are disordered; sequence AASEGSGDGGAPPRPVPELPRL.

It belongs to the argonaute family. Ago subfamily.

Probably involved in the RNA silencing pathway. May bind to short RNAs such as microRNAs (miRNAs) or short interfering RNAs (siRNAs), and represses the translation of mRNAs which are complementary to them. In Oryza sativa subsp. japonica (Rice), this protein is Protein argonaute 15 (AGO15).